A 698-amino-acid chain; its full sequence is Elongation factor G 1 (698 aa).

The 283-residue stretch at 8–290 (ERYRNIGICA…AVIEFLPSPT (283 aa)) folds into the tr-type G domain. GTP-binding positions include 17-24 (AHVDAGKT), 88-92 (DTPGH), and 142-145 (NKMD).

It belongs to the TRAFAC class translation factor GTPase superfamily. Classic translation factor GTPase family. EF-G/EF-2 subfamily.

Its subcellular location is the cytoplasm. Its function is as follows. Catalyzes the GTP-dependent ribosomal translocation step during translation elongation. During this step, the ribosome changes from the pre-translocational (PRE) to the post-translocational (POST) state as the newly formed A-site-bound peptidyl-tRNA and P-site-bound deacylated tRNA move to the P and E sites, respectively. Catalyzes the coordinated movement of the two tRNA molecules, the mRNA and conformational changes in the ribosome. This is Elongation factor G 1 from Vibrio cholerae serotype O1 (strain ATCC 39315 / El Tor Inaba N16961).